A 212-amino-acid polypeptide reads, in one-letter code: Transmembrane emp24 domain-containing protein p24delta7 (212 aa).

The signal sequence occupies residues 1-22; it reads MNHRRSSIVLLILSILSPVTLS. Residues 23–179 lie on the Lumenal side of the membrane; it reads IRYELLSGHT…HNLNIATNSK (157 aa). Residues 32–147 form the GOLD domain; sequence TKCISEEIHA…VETMEFEVKK (116 aa). Residues 162 to 175 are a coiled coil; it reads LRDREEEMHNLNIA. Omega-N-methylated arginine is present on Arg165. The helical transmembrane segment at 180–200 threads the bilayer; sequence MAWLSFVSLAVCLSVAGLQFW. Topologically, residues 201-212 are cytoplasmic; the sequence is HLKTFFQKKKLI. The short motif at 205 to 206 is the COPII vesicle coat-binding element; the sequence is FF. Positions 205-212 match the COPI vesicle coat-binding motif; that stretch reads FFQKKKLI.

Belongs to the EMP24/GP25L family. Probably oligomerizes with other members of the EMP24/GP25L family. Associates with the COPI vesicle coat (coatomer). Associates with the COPII vesicle coat (coatomer).

The protein localises to the endoplasmic reticulum membrane. The protein resides in the golgi apparatus. It is found in the cis-Golgi network membrane. Its subcellular location is the golgi stack membrane. In terms of biological role, involved in vesicular protein trafficking. Mainly functions in the early secretory pathway. Thought to act as cargo receptor at the lumenal side for incorporation of secretory cargo molecules into transport vesicles and to be involved in vesicle coat formation at the cytoplasmic side. In Arabidopsis thaliana (Mouse-ear cress), this protein is Transmembrane emp24 domain-containing protein p24delta7.